The primary structure comprises 1098 residues: Protein diaphanous homolog 2 (1098 aa).

M1 is subject to N-acetylmethionine. Residues 1–62 (MEELGAAASG…SFRKSATKRE (62 aa)) form a disordered region. Over residues 36–52 (ANEEETRNKPKLRDRIT) the composition is skewed to basic and acidic residues. In terms of domain architecture, GBD/FH3 spans 90 to 463 (SLILSEKEVL…QIVLHCSGMD (374 aa)). Coiled coils occupy residues 375–416 (QLRV…NMLK) and 490–539 (EENE…GQGV). 5 disordered regions span residues 537 to 565 (QGVP…PPPP), 578 to 611 (PPPP…GVFP), 679 to 699 (MKGQ…PKKK), 1007 to 1047 (HKRK…NKEG), and 1063 to 1098 (GAAF…MSSK). Composition is skewed to pro residues over residues 543–565 (IPGP…PPPP) and 578–608 (PPPP…PPGG). Residues 544–620 (PGPPPPPPLP…PLLSGPIELP (77 aa)) form the FH1 domain. In terms of domain architecture, FH2 spans 625-1025 (QKKLYKPDIP…SRRAKLAKEK (401 aa)). Positions 999–1050 (FLEALKENHKRKEMEEKSRRAKLAKEKAEQEKLERQKKKKQLIDINKEGDET) form a coiled coil. 2 stretches are compositionally biased toward basic and acidic residues: residues 1007-1032 (HKRK…EKLE) and 1075-1087 (RNPD…LERS). Residues 1048–1078 (DETGVMDNLLEALQSGAAFRDRRKRIPRNPD) form the DAD domain.

This sequence belongs to the formin homology family. Diaphanous subfamily. Interacts with MAPRE1 and APC.

In terms of biological role, may be involved in oogenesis. This chain is Protein diaphanous homolog 2 (Diaph2), found in Mus musculus (Mouse).